We begin with the raw amino-acid sequence, 83 residues long: Hainantoxin-III 8 (83 aa).

A signal peptide spans 1-21; that stretch reads MKASMFLALAGLVLLFVVGYA. The propeptide occupies 22 to 48; that stretch reads SESEEKEFPRELLSKIFAVDDFTGEER. 3 disulfide bridges follow: cysteine 50–cysteine 65, cysteine 57–cysteine 70, and cysteine 64–cysteine 77. Leucine 81 carries the leucine amide modification.

Belongs to the neurotoxin 10 (Hwtx-1) family. 15 (Hntx-3) subfamily. As to quaternary structure, monomer. In terms of tissue distribution, expressed by the venom gland.

It localises to the secreted. Selective antagonist of neuronal tetrodotoxin (TTX)-sensitive voltage-gated sodium channels (IC(50)=1270 nM on Nav1.1/SCN1A, 270 nM on Nav1.2/SCN2A, 491 nM on Nav1.3/SCN3A and 232 nM on Nav1.7/SCN9A). This toxin suppress Nav1.7 current amplitude without significantly altering the activation, inactivation, and repriming kinetics. Short extreme depolarizations partially activate the toxin-bound channel, indicating voltage-dependent inhibition of this toxin. This toxin increases the deactivation of the Nav1.7 current after extreme depolarizations. The toxin-Nav1.7 complex is gradually dissociated upon prolonged strong depolarizations in a voltage-dependent manner, and the unbound toxin rebinds to Nav1.7 after a long repolarization. Moreover, analysis of chimeric channels showed that the DIIS3-S4 linker is critical for toxin binding to Nav1.7. These data are consistent with this toxin interacting with Nav1.7 site 4 and trapping the domain II voltage sensor in the closed state. The chain is Hainantoxin-III 8 from Cyriopagopus hainanus (Chinese bird spider).